The following is a 413-amino-acid chain: Eukaryotic initiation factor 4A-9 (413 aa).

Positions 40–68 (HSFDAMGLKENLLRGIYAYGFEKPSAIQQ) match the Q motif motif. Positions 71–241 (IVPFCKGLDV…RKFMNKPVRI (171 aa)) constitute a Helicase ATP-binding domain. 84 to 91 (AQSGTGKT) is an ATP binding site. The DEAD box signature appears at 189-192 (DEAD). A Helicase C-terminal domain is found at 252-413 (GIKQFYVNVD…ELPANVADLL (162 aa)).

Belongs to the DEAD box helicase family. eIF4A subfamily. As to quaternary structure, eIF4F is a multi-subunit complex, the composition of which varies with external and internal environmental conditions. It is composed of at least EIF4A, EIF4E and EIF4G.

It carries out the reaction ATP + H2O = ADP + phosphate + H(+). Its function is as follows. ATP-dependent RNA helicase which is a subunit of the eIF4F complex involved in cap recognition and is required for mRNA binding to ribosome. In the current model of translation initiation, eIF4A unwinds RNA secondary structures in the 5'-UTR of mRNAs which is necessary to allow efficient binding of the small ribosomal subunit, and subsequent scanning for the initiator codon. The sequence is that of Eukaryotic initiation factor 4A-9 from Nicotiana tabacum (Common tobacco).